The primary structure comprises 1479 residues: Type VII secretion system protein EssC (1479 aa).

The Cytoplasmic segment spans residues Met-1–Asn-229. The helical transmembrane segment at Thr-230 to Val-252 threads the bilayer. Residues Arg-253–Gly-256 lie on the Extracellular side of the membrane. A helical transmembrane segment spans residues Ile-257–Ser-279. The Cytoplasmic portion of the chain corresponds to Glu-280–Lys-1479. 2 FtsK domains span residues Asp-652–Asn-846 and Gln-997–Ser-1183. ATP contacts are provided by residues Gly-672 to Ser-679 and Gly-1014 to Thr-1021.

This sequence belongs to the EssC family. In terms of assembly, homooligomer. Interacts with EsaE.

The protein resides in the cell membrane. Its function is as follows. Component of the type VII secretion system (Ess). Required for the secretion of substrates including EsxA and EsxB. However, unable to support secretion of the substrate protein EsxC. In Staphylococcus aureus (strain Mu50 / ATCC 700699), this protein is Type VII secretion system protein EssC.